We begin with the raw amino-acid sequence, 318 residues long: Glutathione synthetase (318 aa).

The ATP-grasp domain occupies 124-310; that stretch reads EKLFTAWFPE…ITGKLMDAIE (187 aa). Position 150–207 (150–207) interacts with ATP; sequence FREQHGDVILKPLDGMGGASIFRVKEGDPNLSVIIETLTNHGQNYCMAQTFVPDISNG. Residues E281 and N283 each contribute to the Mg(2+) site.

This sequence belongs to the prokaryotic GSH synthase family. Mg(2+) is required as a cofactor. The cofactor is Mn(2+).

The enzyme catalyses gamma-L-glutamyl-L-cysteine + glycine + ATP = glutathione + ADP + phosphate + H(+). It functions in the pathway sulfur metabolism; glutathione biosynthesis; glutathione from L-cysteine and L-glutamate: step 2/2. This Vibrio cholerae serotype O1 (strain ATCC 39315 / El Tor Inaba N16961) protein is Glutathione synthetase.